Reading from the N-terminus, the 414-residue chain is Phospholipase A1-IIbeta (414 aa).

A Glycyl lysine isopeptide (Lys-Gly) (interchain with G-Cter in ubiquitin) cross-link involves residue K19. The stretch at 191-217 (DKTSAQEQVQEELKRLLELYKNEDVTI) forms a coiled coil. The Acyl-ester intermediate role is filled by S223. Catalysis depends on charge relay system residues S223, D289, and H326. Residues 386-414 (DGTWKLNGDRSKKKQEEEDEKEENNCKFP) are disordered. Residues 390 to 410 (KLNGDRSKKKQEEEDEKEENN) adopt a coiled-coil conformation. Residues 392 to 401 (NGDRSKKKQE) show a composition bias toward basic and acidic residues.

It belongs to the AB hydrolase superfamily. Lipase family.

The protein localises to the cytoplasm. Functionally, acylhydrolase that catalyzes the hydrolysis of phospholipids at the sn-1 position. The protein is Phospholipase A1-IIbeta of Arabidopsis thaliana (Mouse-ear cress).